We begin with the raw amino-acid sequence, 463 residues long: Secretogranin-3 (463 aa).

Positions 1 to 20 are cleaved as a signal peptide; the sequence is MGPKYVFITAIIGVFWHVQG. Disordered regions lie at residues 87–111, 225–267, and 353–398; these read VKRSGSVRSSVGGHRGTLDDADSTK, DDDK…PEED, and EDKN…KGKA. Composition is skewed to basic and acidic residues over residues 102–111 and 229–262; these read GTLDDADSTK and QEGKMETRNKNEDRESSETKNEDSFSSKERRNEL.

In terms of assembly, interacts with CHGA. Interacts with secretogranin II/SCG2. Interacts (via C-terminus) with CPE.

Its subcellular location is the cytoplasmic vesicle. The protein localises to the secretory vesicle. It is found in the secretory vesicle membrane. It localises to the secreted. Functionally, member of the granin protein family that regulates the biogenesis of secretory granules. Acts as a sorting receptor for intragranular proteins including chromogranin A/CHGA. May also play a role in angiogenesis. Promotes endothelial proliferation, migration and tube formation through MEK/ERK signaling pathway. This chain is Secretogranin-3 (scg3), found in Xenopus tropicalis (Western clawed frog).